The sequence spans 72 residues: Protein kish-A (72 aa).

The first 26 residues, 1–26 (MSAIFNFQSLLIVILLLICTCAYLRA), serve as a signal peptide directing secretion. The Extracellular portion of the chain corresponds to 27-53 (LVPNLLDKNKTGILGIFWKCARIGERK). Asn35 carries an N-linked (GlcNAc...) asparagine glycan. A helical transmembrane segment spans residues 54 to 71 (SPYVAVCCVVMAFSILFM). Position 72 (Gln72) is a topological domain, cytoplasmic.

It belongs to the KISH family.

It is found in the golgi apparatus membrane. Involved in the early part of the secretory pathway. The sequence is that of Protein kish-A (tmem167a) from Xenopus tropicalis (Western clawed frog).